The chain runs to 215 residues: HTH-type transcriptional regulator for conjugative element R391 (215 aa).

Residues 8–61 (LNHALQLTGVTQSELARRIGIKQQSISQICSGKSARSRYTMQIAEALRVNAHWL) enclose the HTH cro/C1-type domain. The H-T-H motif DNA-binding region spans 19–38 (QSELARRIGIKQQSISQICS).

Functionally, may control the expression of the integrase and inhibit excision of the mobile element R391, and regulate the expression of other genes as well. The chain is HTH-type transcriptional regulator for conjugative element R391 from Providencia rettgeri.